The following is a 366-amino-acid chain: Aminomethyltransferase (366 aa).

Belongs to the GcvT family. As to quaternary structure, the glycine cleavage system is composed of four proteins: P, T, L and H.

The catalysed reaction is N(6)-[(R)-S(8)-aminomethyldihydrolipoyl]-L-lysyl-[protein] + (6S)-5,6,7,8-tetrahydrofolate = N(6)-[(R)-dihydrolipoyl]-L-lysyl-[protein] + (6R)-5,10-methylene-5,6,7,8-tetrahydrofolate + NH4(+). Its function is as follows. The glycine cleavage system catalyzes the degradation of glycine. In Bacillus cereus (strain G9842), this protein is Aminomethyltransferase.